Consider the following 421-residue polypeptide: Heterogeneous nuclear ribonucleoprotein 27C (421 aa).

RRM domains are found at residues 7–88 (GKLF…RTLQ) and 96–173 (YKVF…KAEP). Disordered stretches follow at residues 171–191 (AEPR…GGAY) and 240–373 (GTSP…SEYD). S177 bears the Phosphoserine mark. The span at 240–250 (GTSPQQQQYGY) shows a compositional bias: polar residues. Positions 264 to 273 (PPGPQGPPPQ) are enriched in pro residues. Positions 275–284 (SNYAGPQQTQ) are enriched in polar residues. Residues 293–302 (NSTSTGAPSG) show a composition bias toward low complexity. S366, S368, and S370 each carry phosphoserine. The residue at position 372 (Y372) is a Phosphotyrosine. Position 379 is a phosphoserine (S379). Residues 392-421 (EGASNYGAGPRSAYGNDSSTQPPYATSQAV) form a disordered region. Positions 406–421 (GNDSSTQPPYATSQAV) are enriched in polar residues.

In terms of assembly, interacts with sqd; the interaction is RNA-dependent and may be specific for sqd isoform A/sqdA. Interacts with otu; the interaction is RNA-independent.

The protein localises to the nucleus. It localises to the cytoplasm. In terms of biological role, this protein is a component of ribonucleosomes. Could be needed to organize a concentration gradient of a dorsalizing morphogen (Dm) originating in the germinal vesicle. Interacts with grk mRNA (via 3' UTR) and involved in its localization to the dorsal anterior region of the oocyte during dorsal-ventral axis determination; may function as a ribonuclear protein complex together with sqd and otu. Required for polytene chromosome dispersal in nurse cells during oogenesis. May be involved in the regulation of splicing. This is Heterogeneous nuclear ribonucleoprotein 27C from Drosophila melanogaster (Fruit fly).